Here is a 202-residue protein sequence, read N- to C-terminus: Ion-translocating oxidoreductase complex subunit G (202 aa).

A helical membrane pass occupies residues 11 to 31 (AILLALIALICTALSTGIYLL). FMN phosphoryl threonine is present on Thr-177.

The protein belongs to the RnfG family. In terms of assembly, the complex is composed of six subunits: RnfA, RnfB, RnfC, RnfD, RnfE and RnfG. It depends on FMN as a cofactor.

The protein localises to the cell inner membrane. Part of a membrane-bound complex that couples electron transfer with translocation of ions across the membrane. The sequence is that of Ion-translocating oxidoreductase complex subunit G from Pasteurella multocida (strain Pm70).